We begin with the raw amino-acid sequence, 789 residues long: Endonuclease MutS2 (789 aa).

334–341 (GPNTGGKT) is an ATP binding site. The interval 690-714 (PEKDIQQSGTGKIMKSKTGDTKSEV) is disordered. A Smr domain is found at 714–789 (VDVRGKNLEE…GMGVTIVELK (76 aa)).

The protein belongs to the DNA mismatch repair MutS family. MutS2 subfamily. In terms of assembly, homodimer. Binds to stalled ribosomes, contacting rRNA.

Functionally, endonuclease that is involved in the suppression of homologous recombination and thus may have a key role in the control of bacterial genetic diversity. In terms of biological role, acts as a ribosome collision sensor, splitting the ribosome into its 2 subunits. Detects stalled/collided 70S ribosomes which it binds and splits by an ATP-hydrolysis driven conformational change. Acts upstream of the ribosome quality control system (RQC), a ribosome-associated complex that mediates the extraction of incompletely synthesized nascent chains from stalled ribosomes and their subsequent degradation. Probably generates substrates for RQC. The sequence is that of Endonuclease MutS2 from Alkaliphilus metalliredigens (strain QYMF).